Consider the following 229-residue polypeptide: Demethylmenaquinone methyltransferase (229 aa).

Residues T57, D77, and 101–102 (DV) contribute to the S-adenosyl-L-methionine site.

It belongs to the class I-like SAM-binding methyltransferase superfamily. MenG/UbiE family.

The enzyme catalyses a 2-demethylmenaquinol + S-adenosyl-L-methionine = a menaquinol + S-adenosyl-L-homocysteine + H(+). It functions in the pathway quinol/quinone metabolism; menaquinone biosynthesis; menaquinol from 1,4-dihydroxy-2-naphthoate: step 2/2. Its function is as follows. Methyltransferase required for the conversion of demethylmenaquinol (DMKH2) to menaquinol (MKH2). The sequence is that of Demethylmenaquinone methyltransferase from Chlamydia trachomatis serovar A (strain ATCC VR-571B / DSM 19440 / HAR-13).